Here is a 221-residue protein sequence, read N- to C-terminus: GTP cyclohydrolase III (221 aa).

This sequence belongs to the archaeal-type GTP cyclohydrolase family.

It carries out the reaction GTP + 3 H2O = 2-amino-5-formylamino-6-(5-phospho-D-ribosylamino)pyrimidin-4(3H)-one + 2 phosphate + 2 H(+). Its function is as follows. Catalyzes the formation of 2-amino-5-formylamino-6-ribofuranosylamino-4(3H)-pyrimidinone ribonucleotide monophosphate and inorganic phosphate from GTP. Also has an independent pyrophosphate phosphohydrolase activity. In Pyrobaculum islandicum (strain DSM 4184 / JCM 9189 / GEO3), this protein is GTP cyclohydrolase III.